The primary structure comprises 201 residues: Retinol-binding protein 4 (201 aa).

The N-terminal stretch at 1-18 (MEWVWALVLLAALGGGSA) is a signal peptide. Cystine bridges form between C22–C178, C88–C192, and C138–C147. Q116 serves as a coordination point for substrate. At R139 the chain carries Omega-N-methylarginine.

It belongs to the calycin superfamily. Lipocalin family. Interacts with TTR. Interaction with TTR prevents its loss by filtration through the kidney glomeruli. Interacts with STRA6.

The protein localises to the secreted. In terms of biological role, retinol-binding protein that mediates retinol transport in blood plasma. Delivers retinol from the liver stores to the peripheral tissues. Transfers the bound all-trans retinol to STRA6, that then facilitates retinol transport across the cell membrane. The polypeptide is Retinol-binding protein 4 (Rbp4) (Mus musculus (Mouse)).